Consider the following 512-residue polypeptide: Maturase K (512 aa).

Belongs to the intron maturase 2 family. MatK subfamily.

Its subcellular location is the plastid. It is found in the chloroplast. In terms of biological role, usually encoded in the trnK tRNA gene intron. Probably assists in splicing its own and other chloroplast group II introns. The protein is Maturase K of Acer platanoides (Norway maple).